Consider the following 474-residue polypeptide: SHC-transforming protein 3 (474 aa).

The disordered stretch occupies residues 1–27 (MSATRKSRAGDEPLPRPPRGAPHTSDQ). The PID domain occupies 29–214 (LGPGVTYVVK…LDEPWTEEEG (186 aa)). A CH1 region spans residues 215–378 (DGPDHPYYNS…RMLEELNAEP (164 aa)). The residue at position 282 (S282) is a Phosphoserine. Positions 308–328 (QPVPPQVWPAATSSTESSPRK) are disordered. The SH2 domain occupies 379 to 470 (WYQGEMSRKE…GSELCLQQPV (92 aa)).

Interacts with the Trk receptors in a phosphotyrosine-dependent manner. Once activated, binds to GRB2. Interacts with activated EGF receptors. Tyrosine phosphorylated. Predominantly expressed in the adult brain.

Functionally, signaling adapter that couples activated growth factor receptors to signaling pathway in neurons. Involved in the signal transduction pathways of neurotrophin-activated Trk receptors in cortical neurons. The chain is SHC-transforming protein 3 (Shc3) from Mus musculus (Mouse).